The primary structure comprises 219 residues: Deoxyribose-phosphate aldolase (219 aa).

The active-site Proton donor/acceptor is Asp89. The active-site Schiff-base intermediate with acetaldehyde is the Lys151. The active-site Proton donor/acceptor is Lys180.

Belongs to the DeoC/FbaB aldolase family. DeoC type 1 subfamily.

It is found in the cytoplasm. The catalysed reaction is 2-deoxy-D-ribose 5-phosphate = D-glyceraldehyde 3-phosphate + acetaldehyde. The protein operates within carbohydrate degradation; 2-deoxy-D-ribose 1-phosphate degradation; D-glyceraldehyde 3-phosphate and acetaldehyde from 2-deoxy-alpha-D-ribose 1-phosphate: step 2/2. In terms of biological role, catalyzes a reversible aldol reaction between acetaldehyde and D-glyceraldehyde 3-phosphate to generate 2-deoxy-D-ribose 5-phosphate. In Clostridioides difficile (strain 630) (Peptoclostridium difficile), this protein is Deoxyribose-phosphate aldolase.